The following is a 507-amino-acid chain: MQQRYILALDQGTTSCRAILFDHQAQIVGVAQKELTQYYPQPGWVEHDAMEIWGAQMGVVREVLEVHGVKPAELHAIGITNQRETTVLWDRHTGRPVHNAIVWQDRRTAPLCESLKERGLEQQVRETTGLVIDAYFSATKIRWLLDNVPGVRERAEQGELLFGTMDTWLVWNLTRGACHVTDYSNASRTMLYDIHRLAWDEGLLEALDIPRSLLPEVRPSCGSFGTTHPEMLGGAQIPIAGIAGDQQAALFGQACFEPGMAKNTYGTGCFLLMHSGERPAVSESGLLTTIAWGIDGRVEYALEGAIFIAGAAIQWLRDELKLIDSAEDSEYFAGKVPDAGGVYVVPAFAGLGAPYWDMYARGAIFGLTRGTRKEHITRATLDALAYQTKDVIDAMGRDAGVPLKALRVDGGAAANNVLMQFQADLLGVRVERPPVIETTALGAAYLAGIAVGIWDQAAVAHQTAPERVFEPSMEDDERDRLYRGWQKAVRRSMDWERESDGGVQQSE.

T13 contributes to the ADP binding site. T13, T14, and S15 together coordinate ATP. A sn-glycerol 3-phosphate-binding site is contributed by T13. R17 is an ADP binding site. Residues R83, E84, Y135, and D245 each coordinate sn-glycerol 3-phosphate. Glycerol contacts are provided by R83, E84, Y135, D245, and Q246. 2 residues coordinate ADP: T267 and G310. 4 residues coordinate ATP: T267, G310, Q314, and G411. Positions 411 and 415 each coordinate ADP.

The protein belongs to the FGGY kinase family.

It catalyses the reaction glycerol + ATP = sn-glycerol 3-phosphate + ADP + H(+). It participates in polyol metabolism; glycerol degradation via glycerol kinase pathway; sn-glycerol 3-phosphate from glycerol: step 1/1. With respect to regulation, inhibited by fructose 1,6-bisphosphate (FBP). Its function is as follows. Key enzyme in the regulation of glycerol uptake and metabolism. Catalyzes the phosphorylation of glycerol to yield sn-glycerol 3-phosphate. The protein is Glycerol kinase of Halorhodospira halophila (strain DSM 244 / SL1) (Ectothiorhodospira halophila (strain DSM 244 / SL1)).